The sequence spans 195 residues: MARSYELTRTTGETDISLRLNLDGEGKADIETGVPFMEHMLDLFAKHGQFDLFVKASGDIEVDAHHTTEDLGICIGQAVKEALGTKEGIKRYGNAFVPMDETLAQVVVDLSNRPHLEFRADFPSQKVGTFDTELVHEFFWKLALEARMNLHIIVHYGHNTHHIIEAIFKACARALDEATAIDPRIKGILSTKGLL.

The protein belongs to the imidazoleglycerol-phosphate dehydratase family.

Its subcellular location is the cytoplasm. The enzyme catalyses D-erythro-1-(imidazol-4-yl)glycerol 3-phosphate = 3-(imidazol-4-yl)-2-oxopropyl phosphate + H2O. The protein operates within amino-acid biosynthesis; L-histidine biosynthesis; L-histidine from 5-phospho-alpha-D-ribose 1-diphosphate: step 6/9. This Shouchella clausii (strain KSM-K16) (Alkalihalobacillus clausii) protein is Imidazoleglycerol-phosphate dehydratase.